A 213-amino-acid chain; its full sequence is Orotate phosphoribosyltransferase (213 aa).

5-phospho-alpha-D-ribose 1-diphosphate is bound at residue Lys-26. 34 to 35 (FF) serves as a coordination point for orotate. 5-phospho-alpha-D-ribose 1-diphosphate contacts are provided by residues 72 to 73 (YK), Arg-99, Lys-100, Lys-103, His-105, and 124 to 132 (DDVITAGTA). Thr-128 and Arg-156 together coordinate orotate.

Belongs to the purine/pyrimidine phosphoribosyltransferase family. PyrE subfamily. As to quaternary structure, homodimer. Mg(2+) is required as a cofactor.

The enzyme catalyses orotidine 5'-phosphate + diphosphate = orotate + 5-phospho-alpha-D-ribose 1-diphosphate. It participates in pyrimidine metabolism; UMP biosynthesis via de novo pathway; UMP from orotate: step 1/2. In terms of biological role, catalyzes the transfer of a ribosyl phosphate group from 5-phosphoribose 1-diphosphate to orotate, leading to the formation of orotidine monophosphate (OMP). The sequence is that of Orotate phosphoribosyltransferase from Erwinia tasmaniensis (strain DSM 17950 / CFBP 7177 / CIP 109463 / NCPPB 4357 / Et1/99).